The sequence spans 427 residues: Gamma-glutamyl phosphate reductase (427 aa).

Belongs to the gamma-glutamyl phosphate reductase family.

It localises to the cytoplasm. It catalyses the reaction L-glutamate 5-semialdehyde + phosphate + NADP(+) = L-glutamyl 5-phosphate + NADPH + H(+). Its pathway is amino-acid biosynthesis; L-proline biosynthesis; L-glutamate 5-semialdehyde from L-glutamate: step 2/2. In terms of biological role, catalyzes the NADPH-dependent reduction of L-glutamate 5-phosphate into L-glutamate 5-semialdehyde and phosphate. The product spontaneously undergoes cyclization to form 1-pyrroline-5-carboxylate. The protein is Gamma-glutamyl phosphate reductase of Bifidobacterium adolescentis (strain ATCC 15703 / DSM 20083 / NCTC 11814 / E194a).